A 273-amino-acid polypeptide reads, in one-letter code: Dermonecrotic toxin LspaSicTox-alphaIA2iv (273 aa).

The active site involves His5. 2 residues coordinate Mg(2+): Glu25 and Asp27. His41 functions as the Nucleophile in the catalytic mechanism. Intrachain disulfides connect Cys45–Cys51 and Cys47–Cys190. Asp85 is a Mg(2+) binding site.

The protein belongs to the arthropod phospholipase D family. Class II subfamily. The cofactor is Mg(2+). In terms of tissue distribution, expressed by the venom gland.

Its subcellular location is the secreted. The enzyme catalyses an N-(acyl)-sphingosylphosphocholine = an N-(acyl)-sphingosyl-1,3-cyclic phosphate + choline. It catalyses the reaction an N-(acyl)-sphingosylphosphoethanolamine = an N-(acyl)-sphingosyl-1,3-cyclic phosphate + ethanolamine. It carries out the reaction a 1-acyl-sn-glycero-3-phosphocholine = a 1-acyl-sn-glycero-2,3-cyclic phosphate + choline. The catalysed reaction is a 1-acyl-sn-glycero-3-phosphoethanolamine = a 1-acyl-sn-glycero-2,3-cyclic phosphate + ethanolamine. Dermonecrotic toxins cleave the phosphodiester linkage between the phosphate and headgroup of certain phospholipids (sphingolipid and lysolipid substrates), forming an alcohol (often choline) and a cyclic phosphate. This toxin acts on sphingomyelin (SM). It may also act on ceramide phosphoethanolamine (CPE), lysophosphatidylcholine (LPC) and lysophosphatidylethanolamine (LPE), but not on lysophosphatidylserine (LPS), and lysophosphatidylglycerol (LPG). It acts by transphosphatidylation, releasing exclusively cyclic phosphate products as second products. Induces dermonecrosis, hemolysis, increased vascular permeability, edema, inflammatory response, and platelet aggregation. This is Dermonecrotic toxin LspaSicTox-alphaIA2iv from Loxosceles spadicea (Recluse spider).